The primary structure comprises 375 residues: Chaperone protein DnaJ (375 aa).

The J domain occupies 5 to 70 (DFYEVLGVER…SKRAAYDQYG (66 aa)). The CR-type zinc-finger motif lies at 134-212 (GTTVSIRVPT…CHGEGRVEEY (79 aa)). Zn(2+) contacts are provided by cysteine 147, cysteine 150, cysteine 164, cysteine 167, cysteine 186, cysteine 189, cysteine 200, and cysteine 203. CXXCXGXG motif repeat units follow at residues 147-154 (CKPCDGSG), 164-171 (CPTCGGIG), 186-193 (CPRCHGQG), and 200-207 (CNSCHGEG).

This sequence belongs to the DnaJ family. Homodimer. Requires Zn(2+) as cofactor.

It localises to the cytoplasm. Functionally, participates actively in the response to hyperosmotic and heat shock by preventing the aggregation of stress-denatured proteins and by disaggregating proteins, also in an autonomous, DnaK-independent fashion. Unfolded proteins bind initially to DnaJ; upon interaction with the DnaJ-bound protein, DnaK hydrolyzes its bound ATP, resulting in the formation of a stable complex. GrpE releases ADP from DnaK; ATP binding to DnaK triggers the release of the substrate protein, thus completing the reaction cycle. Several rounds of ATP-dependent interactions between DnaJ, DnaK and GrpE are required for fully efficient folding. Also involved, together with DnaK and GrpE, in the DNA replication of plasmids through activation of initiation proteins. This Pseudomonas entomophila (strain L48) protein is Chaperone protein DnaJ.